Consider the following 265-residue polypeptide: MAVESAAVGVFDSGVGGLSVLREIRARLPSESLLYVADNAHVPYGEKSAEYIRERCERIGDFLLEQGAKALVLACNTATAAAAAELRERYPQVQLVAMEPAVKPAAAATRNGRVGVLATTGTLKSARFAALLDRFASDVQVFTQPCPGLVERIEAGDLYGPQTRALLERLLAPILEQGCDTLILGCTHYPFVKPLLAELIPAEMAVIDTGAAVARQLERVLSARALLASGQAATPRFWTSALPEEMERILPILWGSPESVGKLVV.

Substrate contacts are provided by residues 12-13 and 44-45; these read DS and YG. The Proton donor/acceptor role is filled by Cys-75. 76-77 contributes to the substrate binding site; the sequence is NT. Cys-186 (proton donor/acceptor) is an active-site residue. 187–188 lines the substrate pocket; that stretch reads TH.

The protein belongs to the aspartate/glutamate racemases family.

The catalysed reaction is L-glutamate = D-glutamate. It participates in cell wall biogenesis; peptidoglycan biosynthesis. Its function is as follows. Provides the (R)-glutamate required for cell wall biosynthesis. The sequence is that of Glutamate racemase from Pseudomonas aeruginosa (strain UCBPP-PA14).